A 311-amino-acid chain; its full sequence is Olfactory receptor 5L2 (311 aa).

Residues 1–25 (MGKENCTTVAEFILLGLSDVPELRV) lie on the Extracellular side of the membrane. Asn5 carries N-linked (GlcNAc...) asparagine glycosylation. A helical membrane pass occupies residues 26-46 (CLFLLFLLIYGVTLLANLGMT). Topologically, residues 47–54 (ALIQVSSR) are cytoplasmic. Residues 55-75 (LHTPVYFFLSHLSFVDFCYSS) form a helical membrane-spanning segment. At 76 to 99 (IIVPKMLANIFNKDKAISFLGCMV) the chain is on the extracellular side. An intrachain disulfide couples Cys97 to Cys189. A helical transmembrane segment spans residues 100 to 120 (QFYLFCTCGVTEVFLLAVMAY). The Cytoplasmic portion of the chain corresponds to 121-139 (DRFVAICNPLLYMVTMSQK). A helical membrane pass occupies residues 140–160 (LRVELTSCCYFCGTVCSLIHS). The Extracellular segment spans residues 161-196 (SLALRILFYRSNVINHFFCDLPPLLSLACSDVTVNE). Asn195 carries N-linked (GlcNAc...) asparagine glycosylation. A helical membrane pass occupies residues 197–217 (TLLFLVATLNESVTIMIILTS). Topologically, residues 218 to 237 (YLLILTTILKIHSAESRHKA) are cytoplasmic. A helical transmembrane segment spans residues 238-258 (FSTCASHLTAITVSHGTILYI). The Extracellular segment spans residues 259–271 (YCRPSSGNSGDVD). Residues 272–292 (KVATVFYTVVIPMLNPLIYSL) traverse the membrane as a helical segment. At 293–311 (RNKDVNKALRKVMGSKIHS) the chain is on the cytoplasmic side.

It belongs to the G-protein coupled receptor 1 family.

The protein resides in the cell membrane. Odorant receptor. The sequence is that of Olfactory receptor 5L2 (OR5L2) from Homo sapiens (Human).